Here is a 458-residue protein sequence, read N- to C-terminus: MQRPWAEPYKIKAVEPIRMTTREYREQAIREAGYNTFLLRSEDVYIDLLTDSGTNAMSDRQWGALMMGDEAYAGARSFFRLEEAVREIYGFKYVVPTHQGRGAEHLISRILIKPGDYIPGNMYFTTTRTHQELQGGTFVDVIIDEAHDPQASHPFKGNVDIAKFEALIDRVGADKIPYINVALTVNMAGGQPVSMANLREVRKVCDRHGIRMWSDATRAVENAYFIKEREEGYQDKPVREILKEMMSYFDGCTMSGKKDCLVNIGGFLAMNEEWILQKAREQVVIFEGMPTYGGLAGRDMEAIAQGIYEMVDDDYIAHRIHQVRYLGEQLLEAGIPIVQPIGGHAVFLDARAFLPHIPQDQFPAQALAAALYVDSGVRAMERGIVSAGRNPQTGEHNYPKLELVRLTIPRRVYTDRHMDVVAYSVKHLWKERDTIRGLRMVYEPPTLRFFTARFEPIS.

Lys258 carries the N6-(pyridoxal phosphate)lysine modification.

Belongs to the beta-eliminating lyase family. As to quaternary structure, homotetramer. The cofactor is pyridoxal 5'-phosphate.

The enzyme catalyses L-tyrosine + H2O = phenol + pyruvate + NH4(+). This chain is Tyrosine phenol-lyase (tpl), found in Symbiobacterium thermophilum (strain DSM 24528 / JCM 14929 / IAM 14863 / T).